Reading from the N-terminus, the 297-residue chain is 3-methyl-2-oxobutanoate hydroxymethyltransferase (297 aa).

The segment covering 1–15 (MSEQISEQSEQNVYG) has biased composition (polar residues). Residues 1–40 (MSEQISEQSEQNVYGASSPVPAGESSPSAASAPRTKVRTH) are disordered. The span at 16-33 (ASSPVPAGESSPSAASAP) shows a compositional bias: low complexity. Residues aspartate 78 and aspartate 117 each coordinate Mg(2+). 3-methyl-2-oxobutanoate-binding positions include 78-79 (DS), aspartate 117, and lysine 147. Residue glutamate 149 participates in Mg(2+) binding. The active-site Proton acceptor is the glutamate 215.

Belongs to the PanB family. Homodecamer; pentamer of dimers. Mg(2+) serves as cofactor.

Its subcellular location is the cytoplasm. It carries out the reaction 3-methyl-2-oxobutanoate + (6R)-5,10-methylene-5,6,7,8-tetrahydrofolate + H2O = 2-dehydropantoate + (6S)-5,6,7,8-tetrahydrofolate. It functions in the pathway cofactor biosynthesis; (R)-pantothenate biosynthesis; (R)-pantoate from 3-methyl-2-oxobutanoate: step 1/2. In terms of biological role, catalyzes the reversible reaction in which hydroxymethyl group from 5,10-methylenetetrahydrofolate is transferred onto alpha-ketoisovalerate to form ketopantoate. This Mycobacterium marinum (strain ATCC BAA-535 / M) protein is 3-methyl-2-oxobutanoate hydroxymethyltransferase.